Here is a 701-residue protein sequence, read N- to C-terminus: Polyribonucleotide nucleotidyltransferase (701 aa).

Residues D487 and D493 each contribute to the Mg(2+) site. A KH domain is found at 554 to 613 (PTMLAMKIDQDKIRDVIGKGGATIRAICEETKASIDIEDDGSIKIFGETKEAAEAAKQRV). One can recognise an S1 motif domain in the interval 623 to 691 (GKIYVGKVER…NRGRIKLSIK (69 aa)).

Belongs to the polyribonucleotide nucleotidyltransferase family. Component of the RNA degradosome, which is a multiprotein complex involved in RNA processing and mRNA degradation. Requires Mg(2+) as cofactor.

The protein resides in the cytoplasm. It carries out the reaction RNA(n+1) + phosphate = RNA(n) + a ribonucleoside 5'-diphosphate. Its function is as follows. Involved in mRNA degradation. Catalyzes the phosphorolysis of single-stranded polyribonucleotides processively in the 3'- to 5'-direction. The polypeptide is Polyribonucleotide nucleotidyltransferase (Stutzerimonas stutzeri (strain A1501) (Pseudomonas stutzeri)).